The primary structure comprises 210 residues: Flagellar transcriptional regulator FlhC (210 aa).

The Zn(2+) site is built by C144, C147, C164, and C167.

The protein belongs to the FlhC family. In terms of assembly, heterohexamer composed of two FlhC and four FlhD subunits. Each FlhC binds a FlhD dimer, forming a heterotrimer, and a hexamer assembles by dimerization of two heterotrimers. It depends on Zn(2+) as a cofactor.

It localises to the cytoplasm. In terms of biological role, functions in complex with FlhD as a master transcriptional regulator that regulates transcription of several flagellar and non-flagellar operons by binding to their promoter region. Activates expression of class 2 flagellar genes, including fliA, which is a flagellum-specific sigma factor that turns on the class 3 genes. Also regulates genes whose products function in a variety of physiological pathways. The chain is Flagellar transcriptional regulator FlhC from Cupriavidus pinatubonensis (strain JMP 134 / LMG 1197) (Cupriavidus necator (strain JMP 134)).